Here is a 99-residue protein sequence, read N- to C-terminus: Malonate decarboxylase acyl carrier protein (99 aa).

The residue at position 25 (serine 25) is an O-(phosphoribosyl dephospho-coenzyme A)serine.

The protein belongs to the MdcC family. In terms of processing, covalently binds the prosthetic group of malonate decarboxylase.

It is found in the cytoplasm. Functionally, subunit of malonate decarboxylase, it is an acyl carrier protein to which acetyl and malonyl thioester residues are bound via a 2'-(5''-phosphoribosyl)-3'-dephospho-CoA prosthetic group and turn over during the catalytic mechanism. In Azotobacter vinelandii (strain DJ / ATCC BAA-1303), this protein is Malonate decarboxylase acyl carrier protein.